Here is a 612-residue protein sequence, read N- to C-terminus: RNA-binding protein MRN1 (612 aa).

Low complexity predominate over residues 1 to 28; the sequence is MVVSYNNNNNNNNNNNNNNISNNNNNNN. 2 disordered regions span residues 1–57 and 105–125; these read MVVS…TYAS and PTQF…SQEQ. Polar residues-rich tracts occupy residues 42 to 57 and 115 to 125; these read YQQS…TYAS and DSQQQRFSQEQ. RRM domains follow at residues 201–274, 292–379, 431–504, and 522–602; these read RTVY…WGKP, RNVY…KTQQ, RTVY…WGKH, and RNVY…FGKD.

The protein resides in the cytoplasm. In terms of biological role, RNA-binding protein that binds specific categories of mRNAs, including those that contain upstream open reading frames (uORFs) and internal ribosome entry sites (IRES). Probably involved in translational regulation. This chain is RNA-binding protein MRN1 (MRN1), found in Saccharomyces cerevisiae (strain ATCC 204508 / S288c) (Baker's yeast).